Consider the following 272-residue polypeptide: Glutamate racemase (272 aa).

Residues 10 to 11 (DS) and 42 to 43 (YG) each bind substrate. Cys74 serves as the catalytic Proton donor/acceptor. 75 to 76 (NT) is a binding site for substrate. Residue Cys185 is the Proton donor/acceptor of the active site. 186 to 187 (TH) contributes to the substrate binding site.

Belongs to the aspartate/glutamate racemases family.

The catalysed reaction is L-glutamate = D-glutamate. Its pathway is cell wall biogenesis; peptidoglycan biosynthesis. In terms of biological role, provides the (R)-glutamate required for cell wall biosynthesis. This is Glutamate racemase from Bacillus velezensis (strain DSM 23117 / BGSC 10A6 / LMG 26770 / FZB42) (Bacillus amyloliquefaciens subsp. plantarum).